A 148-amino-acid chain; its full sequence is Glutaredoxin-C10 (148 aa).

Positions 16–55 (TLDLTVHPPPPPPLPPPAPSTVSSSTASTSLSFDEEETSE) are disordered. Over residues 22–34 (HPPPPPPLPPPAP) the composition is skewed to pro residues. A compositionally biased stretch (low complexity) spans 35–47 (STVSSSTASTSLS). One can recognise a Glutaredoxin domain in the interval 55 to 147 (ESKIGRLISE…PRLVEVGALW (93 aa)). Cys-76 and Cys-79 are disulfide-bonded.

The protein belongs to the glutaredoxin family. CC-type subfamily.

It is found in the cytoplasm. Its function is as follows. Has a glutathione-disulfide oxidoreductase activity in the presence of NADPH and glutathione reductase. Reduces low molecular weight disulfides and proteins. This chain is Glutaredoxin-C10 (GRXC10), found in Arabidopsis thaliana (Mouse-ear cress).